The primary structure comprises 307 residues: 4-hydroxy-3-methylbut-2-enyl diphosphate reductase (307 aa).

A [4Fe-4S] cluster-binding site is contributed by Cys12. Residues His41 and His74 each contribute to the (2E)-4-hydroxy-3-methylbut-2-enyl diphosphate site. His41 and His74 together coordinate dimethylallyl diphosphate. His41 and His74 together coordinate isopentenyl diphosphate. Cys96 contacts [4Fe-4S] cluster. Position 124 (His124) interacts with (2E)-4-hydroxy-3-methylbut-2-enyl diphosphate. His124 contacts dimethylallyl diphosphate. His124 provides a ligand contact to isopentenyl diphosphate. Glu126 (proton donor) is an active-site residue. Thr165 is a binding site for (2E)-4-hydroxy-3-methylbut-2-enyl diphosphate. Residue Cys195 coordinates [4Fe-4S] cluster. 4 residues coordinate (2E)-4-hydroxy-3-methylbut-2-enyl diphosphate: Ser223, Ser224, Asn225, and Ser267. 4 residues coordinate dimethylallyl diphosphate: Ser223, Ser224, Asn225, and Ser267. Positions 223, 224, 225, and 267 each coordinate isopentenyl diphosphate.

Belongs to the IspH family. The cofactor is [4Fe-4S] cluster.

The enzyme catalyses isopentenyl diphosphate + 2 oxidized [2Fe-2S]-[ferredoxin] + H2O = (2E)-4-hydroxy-3-methylbut-2-enyl diphosphate + 2 reduced [2Fe-2S]-[ferredoxin] + 2 H(+). It carries out the reaction dimethylallyl diphosphate + 2 oxidized [2Fe-2S]-[ferredoxin] + H2O = (2E)-4-hydroxy-3-methylbut-2-enyl diphosphate + 2 reduced [2Fe-2S]-[ferredoxin] + 2 H(+). It functions in the pathway isoprenoid biosynthesis; dimethylallyl diphosphate biosynthesis; dimethylallyl diphosphate from (2E)-4-hydroxy-3-methylbutenyl diphosphate: step 1/1. Its pathway is isoprenoid biosynthesis; isopentenyl diphosphate biosynthesis via DXP pathway; isopentenyl diphosphate from 1-deoxy-D-xylulose 5-phosphate: step 6/6. In terms of biological role, catalyzes the conversion of 1-hydroxy-2-methyl-2-(E)-butenyl 4-diphosphate (HMBPP) into a mixture of isopentenyl diphosphate (IPP) and dimethylallyl diphosphate (DMAPP). Acts in the terminal step of the DOXP/MEP pathway for isoprenoid precursor biosynthesis. The chain is 4-hydroxy-3-methylbut-2-enyl diphosphate reductase from Magnetococcus marinus (strain ATCC BAA-1437 / JCM 17883 / MC-1).